The following is a 452-amino-acid chain: tRNA modification GTPase MnmE (452 aa).

The (6S)-5-formyl-5,6,7,8-tetrahydrofolate site is built by arginine 23, glutamate 81, and lysine 120. The 157-residue stretch at 217 to 373 (GIKTAIIGQT…LVLRINQMYL (157 aa)) folds into the TrmE-type G domain. K(+) is bound at residue asparagine 227. GTP-binding positions include 227-232 (NVGKSS), 246-252 (TDIPGTT), and 271-274 (DTAG). Residue serine 231 coordinates Mg(2+). K(+) is bound by residues threonine 246, isoleucine 248, and threonine 251. Threonine 252 serves as a coordination point for Mg(2+). Lysine 452 contributes to the (6S)-5-formyl-5,6,7,8-tetrahydrofolate binding site.

Belongs to the TRAFAC class TrmE-Era-EngA-EngB-Septin-like GTPase superfamily. TrmE GTPase family. Homodimer. Heterotetramer of two MnmE and two MnmG subunits. The cofactor is K(+).

Its subcellular location is the cytoplasm. Exhibits a very high intrinsic GTPase hydrolysis rate. Involved in the addition of a carboxymethylaminomethyl (cmnm) group at the wobble position (U34) of certain tRNAs, forming tRNA-cmnm(5)s(2)U34. In Mycoplasma mycoides subsp. mycoides SC (strain CCUG 32753 / NCTC 10114 / PG1), this protein is tRNA modification GTPase MnmE.